The following is a 628-amino-acid chain: Zinc finger protein 555 (628 aa).

The KRAB domain maps to Val4–Asn77. The C2H2-type 1; degenerate zinc finger occupies Tyr172 to His194. C2H2-type zinc fingers lie at residues Tyr200–His222, Tyr228–His250, Tyr256–His278, Tyr284–His306, His312–His334, Tyr340–His362, Tyr368–His390, Tyr396–His418, Tyr424–His446, Tyr452–His474, Tyr480–His502, Tyr508–His530, Tyr536–His558, and Tyr564–His586.

The protein belongs to the krueppel C2H2-type zinc-finger protein family.

Its subcellular location is the nucleus. Functionally, may be involved in transcriptional regulation. In Homo sapiens (Human), this protein is Zinc finger protein 555 (ZNF555).